A 251-amino-acid chain; its full sequence is 5'-nucleotidase SurE (251 aa).

Asp-8, Asp-9, Ser-39, and Asn-90 together coordinate a divalent metal cation.

The protein belongs to the SurE nucleotidase family. It depends on a divalent metal cation as a cofactor.

It localises to the cytoplasm. It catalyses the reaction a ribonucleoside 5'-phosphate + H2O = a ribonucleoside + phosphate. Nucleotidase that shows phosphatase activity on nucleoside 5'-monophosphates. The chain is 5'-nucleotidase SurE from Colwellia psychrerythraea (strain 34H / ATCC BAA-681) (Vibrio psychroerythus).